A 36-amino-acid polypeptide reads, in one-letter code: Potassium channel toxin alpha-KTx 16.5 (36 aa).

Intrachain disulfides connect C7–C28, C13–C33, and C17–C35. Residues 26–33 (GKCQNKQC) form an interaction with Ca(2+)-activated K(+) channels region.

This sequence belongs to the short scorpion toxin superfamily. Potassium channel inhibitor family. Alpha-KTx 16 subfamily. Expressed by the venom gland.

The protein resides in the secreted. In terms of biological role, augments responses to direct muscle stimulation probably by blocking calcium-activated potassium channels. This chain is Potassium channel toxin alpha-KTx 16.5, found in Leiurus hebraeus (Hebrew deathstalker scorpion).